Consider the following 236-residue polypeptide: Acetate--CoA ligase [ADP-forming] II subunit beta (236 aa).

In terms of domain architecture, ATP-grasp spans 26 to 62 (KQVLKAYGLPVPEEKLAKTLDEALKYAEEIGYPVAMK). 52–63 (AEEIGYPVAMKL) serves as a coordination point for ATP.

Belongs to the acetate CoA ligase beta subunit family. As to quaternary structure, heterotetramer of two alpha and two beta subunits.

It carries out the reaction acetate + ATP + CoA = acetyl-CoA + ADP + phosphate. Functionally, catalyzes the reversible formation of acetate and ATP from acetyl-CoA by using ADP and phosphate. Can use other substrates such as phenylacetyl-CoA, indoleacetyl-CoA and isobutyryl-CoA, but not succinyl-CoA. Seems to be involved primarily in the degradation of aryl-CoA esters to the corresponding acids. Participates in the conversion of acetyl-CoA to acetate and in the degradation of branched-chain amino acids via branched-chain-acyl-CoA esters. The chain is Acetate--CoA ligase [ADP-forming] II subunit beta from Pyrococcus furiosus (strain ATCC 43587 / DSM 3638 / JCM 8422 / Vc1).